Here is a 440-residue protein sequence, read N- to C-terminus: Putative short-chain fatty acid transporter (440 aa).

Over 1 to 19 the chain is Periplasmic; the sequence is MIGRISRFMTRFVSRWLPD. The helical transmembrane segment at 20–40 threads the bilayer; the sequence is PLIFAMLLTLLTFVIALWLTP. At 41–53 the chain is on the cytoplasmic side; that stretch reads QTPISMVKMWGDG. Residues 54–74 traverse the membrane as a helical segment; the sequence is FWNLLAFGMQMALIIVTGHAL. Over 75–102 the chain is Periplasmic; it reads ASSAPVKSLLRTAASAAKTPVQGVMLVT. Residues 103-123 traverse the membrane as a helical segment; it reads FFGSVACVINWGFGLVVGAMF. The Cytoplasmic segment spans residues 124–137; sequence AREVARRVPGSDYP. Helical transmembrane passes span 138 to 158 and 159 to 179; these read LLIA…SGSM and PLLA…IPVG. A topological domain (cytoplasmic) is located at residue D180. A helical membrane pass occupies residues 181–201; the sequence is TLFSGFNIFITVALIVVMPFI. Topologically, residues 202-244 are periplasmic; the sequence is TRMMMPKPSDVVSIDPKLLMEEADFQKQLPKDAPPSERLEESR. A run of 2 helical transmembrane segments spans residues 245-265 and 266-286; these read ILTL…FSEH and GFNI…LLLH. At 287–313 the chain is on the periplasmic side; that stretch reads KTPMAYMRAISAAARSTAGILVQFPFY. The helical transmembrane segment at 314–334 threads the bilayer; that stretch reads AGIQLMMEHSGLGGLITEFFI. Residues 335–351 are Cytoplasmic-facing; sequence NVANKDTFPVMTFFSSA. A helical transmembrane segment spans residues 352–372; the sequence is LINFAVPSGGGHWVIQGPFVI. Topologically, residues 373 to 394 are periplasmic; the sequence is PAAQALGADLGKSVMAIAYGEQ. A helical transmembrane segment spans residues 395–415; that stretch reads WMNMAQPFWALPALAIAGLGV. Residues 416-419 lie on the Cytoplasmic side of the membrane; sequence RDIM. A helical transmembrane segment spans residues 420 to 440; it reads GYCITALLFSGVIFVIGLTLF.

The protein localises to the cell inner membrane. In terms of biological role, may be responsible for the uptake of short-chain fatty acids. This chain is Putative short-chain fatty acid transporter (atoE), found in Escherichia coli (strain K12).